We begin with the raw amino-acid sequence, 154 residues long: Small ribosomal subunit protein eS10 (154 aa).

Positions 91–154 are disordered; the sequence is ATMKKQASRP…ERSAPAPQQN (64 aa). Positions 124–135 are enriched in basic and acidic residues; that stretch reads RGDRRQGGDRRG.

This sequence belongs to the eukaryotic ribosomal protein eS10 family.

The protein resides in the cytoplasm. The chain is Small ribosomal subunit protein eS10 (rps10) from Dictyostelium discoideum (Social amoeba).